A 395-amino-acid chain; its full sequence is S-adenosylmethionine synthase 3 (395 aa).

Glu10 lines the Mg(2+) pocket. His16 contacts ATP. Glu44 contacts K(+). L-methionine-binding residues include Glu57 and Gln100. ATP is bound by residues 168 to 170, 236 to 239, Asp247, 253 to 254, Ala270, Lys274, and Lys278; these read DGK, SGRF, and RK. Asp247 lines the L-methionine pocket. Lys278 is an L-methionine binding site.

This sequence belongs to the AdoMet synthase family. As to quaternary structure, homotetramer. Mn(2+) is required as a cofactor. Mg(2+) serves as cofactor. It depends on Co(2+) as a cofactor. Requires K(+) as cofactor.

Its subcellular location is the cytoplasm. It catalyses the reaction L-methionine + ATP + H2O = S-adenosyl-L-methionine + phosphate + diphosphate. The protein operates within amino-acid biosynthesis; S-adenosyl-L-methionine biosynthesis; S-adenosyl-L-methionine from L-methionine: step 1/1. Its function is as follows. Catalyzes the formation of S-adenosylmethionine from methionine and ATP. The reaction comprises two steps that are both catalyzed by the same enzyme: formation of S-adenosylmethionine (AdoMet) and triphosphate, and subsequent hydrolysis of the triphosphate. The protein is S-adenosylmethionine synthase 3 (METK3) of Populus trichocarpa (Western balsam poplar).